The sequence spans 729 residues: Translation initiation factor IF-2 (729 aa).

Positions 20-141 (QFAGGGRGPG…TTTVRAPVRP (122 aa)) are disordered. Over residues 22 to 91 (AGGGRGPGNP…PGGGRGGGRG (70 aa)) the composition is skewed to gly residues. Residues 92 to 108 (GDGRRRDESFVENEGGR) are compositionally biased toward basic and acidic residues. A compositionally biased stretch (low complexity) spans 112 to 127 (SGRTTSTATTARTPGG). The tr-type G domain occupies 229–396 (PRPPVVTIMG…IILLVADLNE (168 aa)). The G1 stretch occupies residues 238–245 (GHVDHGKT). 238-245 (GHVDHGKT) serves as a coordination point for GTP. A G2 region spans residues 263-267 (GITQH). A G3 region spans residues 284–287 (DTPG). GTP-binding positions include 284–288 (DTPGH) and 338–341 (NKID). The segment at 338–341 (NKID) is G4. The interval 374–376 (SAK) is G5.

This sequence belongs to the TRAFAC class translation factor GTPase superfamily. Classic translation factor GTPase family. IF-2 subfamily.

It is found in the cytoplasm. Functionally, one of the essential components for the initiation of protein synthesis. Protects formylmethionyl-tRNA from spontaneous hydrolysis and promotes its binding to the 30S ribosomal subunits. Also involved in the hydrolysis of GTP during the formation of the 70S ribosomal complex. This Roseiflexus sp. (strain RS-1) protein is Translation initiation factor IF-2.